A 748-amino-acid polypeptide reads, in one-letter code: MSFIDPYQHIVVEHQYSHVFTVTVRKATNVTKGAIGDMLDTPDPYVELFIPSAPDCRKRTKHFNNDVNPVWNETFEFILDPNQDNVLEVTLMDANYVMDETLGMATFPISSLKLGEKKEVQLTFNNVTEMTLELSLEVCSSTDLRFSMALCDEEKKFRQQRKDNIMQSMKSFLGEENSKNLTTSRDVPVIAVLGSGGGFRAMVGFAGVMKALYESGVLDCATYIAGLSGSTWYMSTLYSHPDFPEKGPKEINQELMNSVSHNPLLLLTPQKVKRYIEALWNKKSSGQPVTFTDIFGMLIGETLIHNRMDTTLSDMKEKVSEAQCALPLFTCLHVKPDVSELMFADWVEFSPYEIGMAKYGTFMSPDLFGSKFFMGTVVKKYSENPLHFLMGVWGSAFSILFNRVLGVSNSQNKGPTMEEELENIRLKHLVSNDSSDSEDESQHPKGTENSEANEEYQNSSQESWVQRMLMALVGDSALFNTREGRAGKVHNFMLGLNLNSCYPLSPLADLLTQESVEEDELDAAVADPDEFERIYEPLDVKSKKIHIVDSGLTFNLPYPLILRPQRGVDLIISFDFSARPSDSSPPFKEILLAEKWAKMNKLPFPKIDPNVFDREGLKECYVFKPKDTSSEKDCPTIIHFVLANINFRKYKAPGLPRESKEEKDFADFDIFDDPNTPFSTFNFQYPNEAFKRLHDLMEFNTLNNLDVIKQAMMESIEYRKENPSRCSVSLSSVEARRFFNKNNLNNHT.

Residues 1-178 form a phospholipid binding region; the sequence is MSFIDPYQHI…MKSFLGEENS (178 aa). The 119-residue stretch at 6–124 folds into the C2 domain; it reads PYQHIVVEHQ…GEKKEVQLTF (119 aa). Residues D40, T41, D43, N65, D93, A94, and N95 each contribute to the Ca(2+) site. Residues 138-740 form the PLA2c domain; sequence VCSSTDLRFS…SSVEARRFFN (603 aa). The active-site Nucleophile is S228. The interval 431–459 is disordered; the sequence is SNDSSDSEDESQHPKGTENSEANEEYQNS. The segment covering 449–459 has biased composition (polar residues); it reads NSEANEEYQNS. At S505 the chain carries Phosphoserine; by MAPK. The active-site Proton acceptor is the D549.

Post-translationally, activated by phosphorylation on a serine residue.

The protein localises to the cytoplasm. The protein resides in the cytoplasmic vesicle. The enzyme catalyses a 1,2-diacyl-sn-glycero-3-phosphocholine + H2O = a 1-acyl-sn-glycero-3-phosphocholine + a fatty acid + H(+). It catalyses the reaction a 1-acyl-sn-glycero-3-phosphocholine + H2O = sn-glycerol 3-phosphocholine + a fatty acid + H(+). With respect to regulation, stimulated by agonists such as ATP, EGF, thrombin and bradykinin as well as by cytosolic Ca(2+). Selectively hydrolyzes arachidonyl phospholipids in the sn-2 position releasing arachidonic acid. Together with its lysophospholipid activity, it is implicated in the initiation of the inflammatory response. This Gallus gallus (Chicken) protein is Cytosolic phospholipase A2 (PLA2G4A).